The following is a 550-amino-acid chain: Spermatogenesis-associated protein 2 (550 aa).

One can recognise a PUB domain in the interval 83-156 (TVGTAFATLE…YNVRDHPGGA (74 aa)). The PIM motif motif lies at 320 to 337 (YHLSSLDEVDLYTERGLG). Residues 457–480 (SKPVGSGPSPVGSLVSSGSSSSGG) are disordered.

It belongs to the SPATA2 family.

It is found in the cytoplasm. It localises to the nucleus. In terms of biological role, bridging factor that mediates the recruitment of cyld to the LUBAC complex, thereby regulating TNF-alpha-induced necroptosis. Required to activate the 'Met-1'- (linear) and 'Lys-63'-linked deubiquitinase activities of cyld. The chain is Spermatogenesis-associated protein 2 from Danio rerio (Zebrafish).